The following is a 344-amino-acid chain: tRNA N6-adenosine threonylcarbamoyltransferase (344 aa).

Fe cation-binding residues include His110 and His114. Substrate-binding positions include 133–137, Asp166, Gly179, and Asn278; that span reads VVSGA. Residue Asp303 coordinates Fe cation.

It belongs to the KAE1 / TsaD family. The cofactor is Fe(2+).

The protein localises to the cytoplasm. It catalyses the reaction L-threonylcarbamoyladenylate + adenosine(37) in tRNA = N(6)-L-threonylcarbamoyladenosine(37) in tRNA + AMP + H(+). Required for the formation of a threonylcarbamoyl group on adenosine at position 37 (t(6)A37) in tRNAs that read codons beginning with adenine. Is involved in the transfer of the threonylcarbamoyl moiety of threonylcarbamoyl-AMP (TC-AMP) to the N6 group of A37, together with TsaE and TsaB. TsaD likely plays a direct catalytic role in this reaction. The polypeptide is tRNA N6-adenosine threonylcarbamoyltransferase (Chlamydia abortus (strain DSM 27085 / S26/3) (Chlamydophila abortus)).